The following is a 128-amino-acid chain: Large ribosomal subunit protein bL17 (128 aa).

This sequence belongs to the bacterial ribosomal protein bL17 family. In terms of assembly, part of the 50S ribosomal subunit. Contacts protein L32.

The polypeptide is Large ribosomal subunit protein bL17 (Pseudomonas syringae pv. syringae (strain B728a)).